Consider the following 552-residue polypeptide: Probable ABC transporter ATP-binding/permease protein HI_0664 (552 aa).

6 helical membrane-spanning segments follow: residues 22–42, 52–72, 139–159, 162–182, 253–273, and 278–298; these read IMAF…FIMV, LNFD…VLAV, IAPI…FAQL, WFVL…PIIT, EVAV…LFSL, and FAAF…VIAL. The ABC transmembrane type-1 domain occupies 23 to 307; that stretch reads MAFTITMGTL…LSNLSSNLLQ (285 aa). Residues 340-552 enclose the ABC transporter domain; it reads IDVENVNFAY…VIGIENGRMS (213 aa). 372–379 is an ATP binding site; sequence GRSGSGKS.

The protein belongs to the ABC transporter superfamily. Lipid exporter (TC 3.A.1.106) family.

The protein localises to the cell inner membrane. This Haemophilus influenzae (strain ATCC 51907 / DSM 11121 / KW20 / Rd) protein is Probable ABC transporter ATP-binding/permease protein HI_0664.